The sequence spans 293 residues: Indole-3-glycerol phosphate synthase (293 aa).

This sequence belongs to the TrpC family.

The catalysed reaction is 1-(2-carboxyphenylamino)-1-deoxy-D-ribulose 5-phosphate + H(+) = (1S,2R)-1-C-(indol-3-yl)glycerol 3-phosphate + CO2 + H2O. It participates in amino-acid biosynthesis; L-tryptophan biosynthesis; L-tryptophan from chorismate: step 4/5. This Prochlorococcus marinus (strain SARG / CCMP1375 / SS120) protein is Indole-3-glycerol phosphate synthase.